A 325-amino-acid polypeptide reads, in one-letter code: Glucosyl-3-phosphoglycerate synthase (325 aa).

Residues 37-41, Ser71, Lys104, and 124-125 each bind UDP-alpha-D-glucose; these read PSLNE and DS. Asp126 provides a ligand contact to Mn(2+). Residue 171–174 coordinates (2R)-3-phosphoglycerate; the sequence is GRVT. Residues 216 to 219 and 243 to 248 contribute to the UDP-alpha-D-glucose site; these read YGVE and RIHDNQ. His245 contacts Mn(2+). Asn247 is a (2R)-3-phosphoglycerate binding site.

This sequence belongs to the glycosyltransferase 2 family. In terms of assembly, homodimer in solution. The cofactor is Co(2+). It depends on Mg(2+) as a cofactor. Mn(2+) is required as a cofactor. Requires Ni(2+) as cofactor. Zn(2+) serves as cofactor.

It carries out the reaction an NDP-alpha-D-glucose + (2R)-3-phosphoglycerate = (2R)-2-O-(alpha-D-glucopyranosyl)-3-phospho-glycerate + a ribonucleoside 5'-diphosphate + H(+). It catalyses the reaction (2R)-3-phosphoglycerate + UDP-alpha-D-glucose = (2R)-2-O-(alpha-D-glucopyranosyl)-3-phospho-glycerate + UDP + H(+). The enzyme catalyses ADP-alpha-D-glucose + (2R)-3-phosphoglycerate = (2R)-2-O-(alpha-D-glucopyranosyl)-3-phospho-glycerate + ADP + H(+). Its activity is regulated as follows. Inhibited by ADP and EDTA. Functionally, involved in the biosynthesis of the compatible solute mannosylglucosylglycerate through a phosphorylating pathway. Catalyzes the transfer of the glucose moiety from a nuleotide sugar such as UDP-alpha-D-glucose to the position 2 of 3-phospho-D-glycerate (3-PGA) to form glucosyl-3-phosphoglycerate (GPG). UDP-glucose is the preferred substrate, but it can be partially replaced by ADP-glucose. The protein is Glucosyl-3-phosphoglycerate synthase of Petrotoga mobilis (strain DSM 10674 / SJ95).